We begin with the raw amino-acid sequence, 336 residues long: Large ribosomal subunit protein uL10 (336 aa).

Residues 292–336 are disordered; the sequence is LKEKLSSRAAAPAPEEKEEEVEEEAEEEEEEEEEDAAAGLGALFG. Residues 307 to 327 are compositionally biased toward acidic residues; the sequence is EKEEEVEEEAEEEEEEEEEDA.

It belongs to the universal ribosomal protein uL10 family. In terms of assembly, part of the 50S ribosomal subunit. Forms part of the ribosomal stalk which helps the ribosome interact with GTP-bound translation factors. Forms a heptameric L10(L12)2(L12)2(L12)2 complex, where L10 forms an elongated spine to which the L12 dimers bind in a sequential fashion.

Its function is as follows. Forms part of the ribosomal stalk, playing a central role in the interaction of the ribosome with GTP-bound translation factors. This chain is Large ribosomal subunit protein uL10, found in Methanothermobacter thermautotrophicus (strain ATCC 29096 / DSM 1053 / JCM 10044 / NBRC 100330 / Delta H) (Methanobacterium thermoautotrophicum).